Here is a 729-residue protein sequence, read N- to C-terminus: Catalase-peroxidase (729 aa).

The segment at residues 95-218 (WHSAGTYRGA…LAAVEMGLVY (124 aa)) is a cross-link (tryptophyl-tyrosyl-methioninium (Trp-Tyr) (with M-244)). Histidine 96 functions as the Proton acceptor in the catalytic mechanism. Positions 218-244 (YVNPEGPHGHPDPVASGPDVRDTFARM) form a cross-link, tryptophyl-tyrosyl-methioninium (Tyr-Met) (with W-95). Histidine 259 provides a ligand contact to heme b.

Belongs to the peroxidase family. Peroxidase/catalase subfamily. In terms of assembly, homodimer or homotetramer. It depends on heme b as a cofactor. In terms of processing, formation of the three residue Trp-Tyr-Met cross-link is important for the catalase, but not the peroxidase activity of the enzyme.

It carries out the reaction H2O2 + AH2 = A + 2 H2O. The enzyme catalyses 2 H2O2 = O2 + 2 H2O. Its function is as follows. Bifunctional enzyme with both catalase and broad-spectrum peroxidase activity. In Synechococcus sp. (strain CC9605), this protein is Catalase-peroxidase.